The primary structure comprises 941 residues: Bifunctional glutamine synthetase adenylyltransferase/adenylyl-removing enzyme (941 aa).

The tract at residues 1-431 is adenylyl removase; sequence MSSAPPFAAA…TFRNAFRLAG (431 aa). The adenylyl transferase stretch occupies residues 447–941; sequence NGHGMRPHAG…DGTIAQAEVK (495 aa).

This sequence belongs to the GlnE family. Mg(2+) is required as a cofactor.

It carries out the reaction [glutamine synthetase]-O(4)-(5'-adenylyl)-L-tyrosine + phosphate = [glutamine synthetase]-L-tyrosine + ADP. The enzyme catalyses [glutamine synthetase]-L-tyrosine + ATP = [glutamine synthetase]-O(4)-(5'-adenylyl)-L-tyrosine + diphosphate. Functionally, involved in the regulation of glutamine synthetase GlnA, a key enzyme in the process to assimilate ammonia. When cellular nitrogen levels are high, the C-terminal adenylyl transferase (AT) inactivates GlnA by covalent transfer of an adenylyl group from ATP to specific tyrosine residue of GlnA, thus reducing its activity. Conversely, when nitrogen levels are low, the N-terminal adenylyl removase (AR) activates GlnA by removing the adenylyl group by phosphorolysis, increasing its activity. The regulatory region of GlnE binds the signal transduction protein PII (GlnB) which indicates the nitrogen status of the cell. The chain is Bifunctional glutamine synthetase adenylyltransferase/adenylyl-removing enzyme from Bordetella bronchiseptica (strain ATCC BAA-588 / NCTC 13252 / RB50) (Alcaligenes bronchisepticus).